Reading from the N-terminus, the 344-residue chain is Thioredoxin reductase FGSG_00043 (344 aa).

FAD is bound by residues 12–15 (GGPA), 34–39 (DSVSYR), His-51, and Ala-121. Cys-165 and Cys-168 form a disulfide bridge. FAD is bound by residues Asp-314 and 321–322 (FV).

Belongs to the class-II pyridine nucleotide-disulfide oxidoreductase family. As to quaternary structure, homodimer. The cofactor is FAD.

Its pathway is mycotoxin biosynthesis. Its function is as follows. Thioredoxin reductase; part of the gene cluster that mediates the biosynthesis of gramillins A and B, bicyclic lipopeptides that induce cell death in maize leaves but not in wheat leaves. The nonribosomal peptide synthetase GRA1 incorporates respectively a glutamic adic (Glu), a leucine (Leu), a serine (Ser), a hydroxyglutamine (HOGln), a 2-amino decanoic acid, and 2 cysteins (CysB and CysA). The biosynthesis of 2-amino decanoic acid incorporated in gramillins could be initiated by a fatty acid synthase composed of the alpha and beta subunits FGSG_00036 and FGSG_11656. The cytochrome P450 monooxygenase FGSG_15680 could hydroxylate the fatty acid chain. Subsequent oxidation to the ketone by the oxidoreductase FGSG_00048 and transamination by aminotransferase FGSG_00049 could form 2-amino-decanoic acid. On the other hand, FGSG_15680 could also be responsible for the HO-modified glutamine at the gamma-position. Whether hydroxylation occurs on the fully assembled product or on the Gln residue prior to assembly into the gramillins requires further proof. The thioredoxin FGSG_00043 could also be required for the disulfide-bond formation between CysA and CysB. The specific involvement of the remaining proteins from the cluster is more difficult to discern, but could have broader regulatory (FGSG_00040 and FGSG_11657) or enzymatic functions (FGSG_00044 and FGSG_00045). The final C-domain of GRA1 does not possess the expected sequence of a termination CT domain, often implicated in macrocyclization and release of a cyclopeptidein fungal NRPs; and the thioesterase FGSG_00047 may act in concert with the terminal C-domain of GRA1 to catalyze the formation of the macrocyclic anhydride and release of the products. In Gibberella zeae (strain ATCC MYA-4620 / CBS 123657 / FGSC 9075 / NRRL 31084 / PH-1) (Wheat head blight fungus), this protein is Thioredoxin reductase FGSG_00043.